The chain runs to 661 residues: Polyadenylate-binding protein, cytoplasmic and nuclear (661 aa).

The span at 1 to 11 shows a compositional bias: polar residues; it reads MSAAETNQVQE. The interval 1-61 is disordered; that stretch reads MSAAETNQVQ…SAEEQGESSG (61 aa). Low complexity predominate over residues 20–51; sequence SSSSPAAGGATTATTTNNAESSDATSSSVPAD. RRM domains follow at residues 67-145, 155-232, 248-325, and 351-428; these read ASLY…WSQR, GNIF…KHVS, TNIY…RAQK, and VNLF…LAQR. Residues 473–563 form a disordered region; it reads FPPNGRGNAP…PNRPAGGNVP (91 aa). Over residues 501-511 the composition is skewed to pro residues; the sequence is EQWPRPGPNGQ. Positions 523–532 are enriched in polar residues; it reads QDFNGQNMRP. Residues 533–549 are compositionally biased toward low complexity; it reads QQQQQQQQQQQQQQQQQ. One can recognise a PABC domain in the interval 563 to 644; sequence PAKDLAALIA…ALNAFEEYKN (82 aa).

This sequence belongs to the polyadenylate-binding protein type-1 family.

Its subcellular location is the cytoplasm. The protein resides in the nucleus. Functionally, binds the poly(A) tail of mRNA. Appears to be an important mediator of the multiple roles of the poly(A) tail in mRNA biogenesis, stability and translation. In the nucleus, involved in both mRNA cleavage and polyadenylation. Is also required for efficient mRNA export to the cytoplasm. Acts in concert with a poly(A)-specific nuclease (PAN) to affect poly(A) tail shortening, which may occur concomitantly with either nucleocytoplasmic mRNA transport or translational initiation. In the cytoplasm, stimulates translation initiation and regulates mRNA decay through translation termination-coupled poly(A) shortening, probably mediated by PAN. This Lodderomyces elongisporus (strain ATCC 11503 / CBS 2605 / JCM 1781 / NBRC 1676 / NRRL YB-4239) (Yeast) protein is Polyadenylate-binding protein, cytoplasmic and nuclear (PAB1).